A 131-amino-acid chain; its full sequence is Small ribosomal subunit protein eS8 (131 aa).

The segment at 1-38 (MKLGAYYKGGDLKKPSGGKKRKVRRTKKKALGGGPPQI) is disordered. Positions 16 to 30 (SGGKKRKVRRTKKKA) are enriched in basic residues.

This sequence belongs to the eukaryotic ribosomal protein eS8 family. Part of the 30S ribosomal subunit.

In Pyrobaculum arsenaticum (strain DSM 13514 / JCM 11321 / PZ6), this protein is Small ribosomal subunit protein eS8.